We begin with the raw amino-acid sequence, 319 residues long: Ribosomal protein L11 methyltransferase (319 aa).

The S-adenosyl-L-methionine site is built by threonine 165, glycine 186, aspartate 208, and asparagine 251.

Belongs to the methyltransferase superfamily. PrmA family.

The protein localises to the cytoplasm. It catalyses the reaction L-lysyl-[protein] + 3 S-adenosyl-L-methionine = N(6),N(6),N(6)-trimethyl-L-lysyl-[protein] + 3 S-adenosyl-L-homocysteine + 3 H(+). Its function is as follows. Methylates ribosomal protein L11. The chain is Ribosomal protein L11 methyltransferase from Limosilactobacillus reuteri subsp. reuteri (strain JCM 1112) (Lactobacillus reuteri).